The sequence spans 393 residues: Formate-dependent phosphoribosylglycinamide formyltransferase (393 aa).

Residues 22-23 (EL) and E82 each bind N(1)-(5-phospho-beta-D-ribosyl)glycinamide. ATP-binding positions include R114, K155, 160 to 165 (SSGKGQ), 195 to 198 (EGFI), and E203. The region spanning 119–308 (RLAAEELGLP…EFALHARAIL (190 aa)) is the ATP-grasp domain. Residues E267 and E279 each contribute to the Mg(2+) site. N(1)-(5-phospho-beta-D-ribosyl)glycinamide-binding positions include D286, K356, and 363–364 (RR).

Belongs to the PurK/PurT family. Homodimer.

It carries out the reaction N(1)-(5-phospho-beta-D-ribosyl)glycinamide + formate + ATP = N(2)-formyl-N(1)-(5-phospho-beta-D-ribosyl)glycinamide + ADP + phosphate + H(+). It participates in purine metabolism; IMP biosynthesis via de novo pathway; N(2)-formyl-N(1)-(5-phospho-D-ribosyl)glycinamide from N(1)-(5-phospho-D-ribosyl)glycinamide (formate route): step 1/1. Functionally, involved in the de novo purine biosynthesis. Catalyzes the transfer of formate to 5-phospho-ribosyl-glycinamide (GAR), producing 5-phospho-ribosyl-N-formylglycinamide (FGAR). Formate is provided by PurU via hydrolysis of 10-formyl-tetrahydrofolate. This chain is Formate-dependent phosphoribosylglycinamide formyltransferase, found in Azotobacter vinelandii (strain DJ / ATCC BAA-1303).